Here is a 182-residue protein sequence, read N- to C-terminus: UPF0397 protein BA_2640/GBAA_2640/BAS2460 (182 aa).

5 helical membrane-spanning segments follow: residues 9-29 (VVAI…GFSI), 40-60 (AILT…IGLI), 71-91 (WSIW…MGFI), 114-134 (ITGL…DIIV), and 142-162 (IVIQ…VLGL).

It belongs to the UPF0397 family.

It is found in the cell membrane. In Bacillus anthracis, this protein is UPF0397 protein BA_2640/GBAA_2640/BAS2460.